A 167-amino-acid polypeptide reads, in one-letter code: Leptin (167 aa).

Residues 1–21 form the signal peptide; the sequence is MCWRPLCRFLWLWSYLSYVQA. A disulfide bridge links cysteine 117 with cysteine 167.

Belongs to the leptin family.

The protein localises to the secreted. Its function is as follows. Key player in the regulation of energy balance and body weight control. Once released into the circulation, has central and peripheral effects by binding LEPR, found in many tissues, which results in the activation of several major signaling pathways. In the hypothalamus, acts as an appetite-regulating factor that induces a decrease in food intake and an increase in energy consumption by inducing anorexinogenic factors and suppressing orexigenic neuropeptides, also regulates bone mass and secretion of hypothalamo-pituitary-adrenal hormones. In the periphery, increases basal metabolism, influences reproductive function, regulates pancreatic beta-cell function and insulin secretion, is pro-angiogenic for endothelial cell and affects innate and adaptive immunity. In the arcuate nucleus of the hypothalamus, activates by depolarization POMC neurons inducing FOS and SOCS3 expression to release anorexigenic peptides and inhibits by hyperpolarization NPY neurons inducing SOCS3 with a consequent reduction on release of orexigenic peptides. In addition to its known satiety inducing effect, has a modulatory role in nutrient absorption. In the intestine, reduces glucose absorption by enterocytes by activating PKC and leading to a sequential activation of p38, PI3K and ERK signaling pathways which exerts an inhibitory effect on glucose absorption. Acts as a growth factor on certain tissues, through the activation of different signaling pathways increases expression of genes involved in cell cycle regulation such as CCND1, via JAK2-STAT3 pathway, or VEGFA, via MAPK1/3 and PI3K-AKT1 pathways. May also play an apoptotic role via JAK2-STAT3 pathway and up-regulation of BIRC5 expression. Pro-angiogenic, has mitogenic activity on vascular endothelial cells and plays a role in matrix remodeling by regulating the expression of matrix metalloproteinases (MMPs) and tissue inhibitors of metalloproteinases (TIMPs). In innate immunity, modulates the activity and function of neutrophils by increasing chemotaxis and the secretion of oxygen radicals. Increases phagocytosis by macrophages and enhances secretion of pro-inflammatory mediators. Increases cytotoxic ability of NK cells. Plays a pro-inflammatory role, in synergy with IL1B, by inducing NOS2 which promotes the production of IL6, IL8 and Prostaglandin E2, through a signaling pathway that involves JAK2, PI3K, MAP2K1/MEK1 and MAPK14/p38. In adaptive immunity, promotes the switch of memory T-cells towards T helper-1 cell immune responses. Increases CD4(+)CD25(-) T cells proliferation and reduces autophagy during TCR (T cell receptor) stimulation, through MTOR signaling pathway activation and BCL2 up-regulation. In Mus musculus (Mouse), this protein is Leptin (Lep).